Reading from the N-terminus, the 164-residue chain is Disulfide bond formation protein B (164 aa).

The Cytoplasmic segment spans residues 1-9 (MTLPSARTC). A helical transmembrane segment spans residues 10 to 26 (FLLGFLFCAALLAAALY). Over 27 to 44 (FQFSGGLEPCPLCISQRI) the chain is Periplasmic. C36 and C39 form a disulfide bridge. Residues 45–61 (MVLAVALVFLAAAIHHP) traverse the membrane as a helical segment. Residues 62–68 (ASLGIRA) are Cytoplasmic-facing. The chain crosses the membrane as a helical span at residues 69–85 (YALLGTAVALGGASISG). At 86–142 (RHVWLLHLPPEEVPECGPGLSYMFRNFPLGDTLKAMLSGTGDCAKVDWTFLGLSMPA) the chain is on the periplasmic side. A disulfide bond links C101 and C128. A helical membrane pass occupies residues 143-161 (WVLICFLGLGAFSLLQWWN). Residues 162–164 (AER) lie on the Cytoplasmic side of the membrane.

The protein belongs to the DsbB family.

The protein resides in the cell inner membrane. Required for disulfide bond formation in some periplasmic proteins. Acts by oxidizing the DsbA protein. This Methylococcus capsulatus (strain ATCC 33009 / NCIMB 11132 / Bath) protein is Disulfide bond formation protein B.